A 256-amino-acid chain; its full sequence is Dihydroorotate dehydrogenase B (NAD(+)), electron transfer subunit (256 aa).

An FAD-binding FR-type domain is found at 1 to 101 (MKKAHLTVQS…LGPLGNGFPV (101 aa)). FAD is bound by residues 52–55 (RPLS), 69–71 (IYR), and 76–77 (GT). 4 residues coordinate [2Fe-2S] cluster: C220, C225, C228, and C243.

This sequence belongs to the PyrK family. In terms of assembly, heterotetramer of 2 PyrK and 2 PyrD type B subunits. The cofactor is [2Fe-2S] cluster. It depends on FAD as a cofactor.

Its pathway is pyrimidine metabolism; UMP biosynthesis via de novo pathway; orotate from (S)-dihydroorotate (NAD(+) route): step 1/1. Responsible for channeling the electrons from the oxidation of dihydroorotate from the FMN redox center in the PyrD type B subunit to the ultimate electron acceptor NAD(+). In Bacillus velezensis (strain DSM 23117 / BGSC 10A6 / LMG 26770 / FZB42) (Bacillus amyloliquefaciens subsp. plantarum), this protein is Dihydroorotate dehydrogenase B (NAD(+)), electron transfer subunit.